The primary structure comprises 257 residues: BTB/POZ domain-containing protein kctd15-like (257 aa).

Residues S9 and S12 each carry the phosphoserine modification. One can recognise a BTB domain in the interval 30–100; it reads APVHIDVGGH…LRTSKLLLPE (71 aa).

The protein is BTB/POZ domain-containing protein kctd15-like (kctd15l) of Danio rerio (Zebrafish).